We begin with the raw amino-acid sequence, 152 residues long: UPF0266 membrane protein CKO_01158 (152 aa).

The next 3 membrane-spanning stretches (helical) occupy residues 6-26, 45-65, and 67-87; these read LVLV…QFIM, VDSV…VTSH, and AQIT…IFWV.

Belongs to the UPF0266 family.

Its subcellular location is the cell inner membrane. This chain is UPF0266 membrane protein CKO_01158, found in Citrobacter koseri (strain ATCC BAA-895 / CDC 4225-83 / SGSC4696).